The chain runs to 241 residues: Probable 2-phosphosulfolactate phosphatase (241 aa).

Belongs to the ComB family. Requires Mg(2+) as cofactor.

The enzyme catalyses (2R)-O-phospho-3-sulfolactate + H2O = (2R)-3-sulfolactate + phosphate. This is Probable 2-phosphosulfolactate phosphatase from Gloeothece citriformis (strain PCC 7424) (Cyanothece sp. (strain PCC 7424)).